Consider the following 239-residue polypeptide: Ribosomal RNA small subunit methyltransferase A (239 aa).

S-adenosyl-L-methionine is bound by residues N23, I25, G50, E72, D97, and N116.

The protein belongs to the class I-like SAM-binding methyltransferase superfamily. rRNA adenine N(6)-methyltransferase family. RsmA subfamily.

It localises to the cytoplasm. The catalysed reaction is adenosine(1518)/adenosine(1519) in 16S rRNA + 4 S-adenosyl-L-methionine = N(6)-dimethyladenosine(1518)/N(6)-dimethyladenosine(1519) in 16S rRNA + 4 S-adenosyl-L-homocysteine + 4 H(+). In terms of biological role, specifically dimethylates two adjacent adenosines (A1518 and A1519) in the loop of a conserved hairpin near the 3'-end of 16S rRNA in the 30S particle. May play a critical role in biogenesis of 30S subunits. This Rickettsia felis (strain ATCC VR-1525 / URRWXCal2) (Rickettsia azadi) protein is Ribosomal RNA small subunit methyltransferase A.